Reading from the N-terminus, the 499-residue chain is MLACPSTSSPWPQRQPPSPCPGGGGGATRHVALAARSKRRGAGPAAAEGVDEAAAEAAELVRSLLRRTAGGKERLVPVLDRHVRVVRTEHCFLLFEELGRRDAWLQCLDVFRWMQKQRWYVADNGIYSKLISVMGRKGQIRMAMWLFSQMRNSGCKPDTSVYNSLIGAHLHSRDKTKALAKALGYFEKMKCIERCQPTIVTYNILLRAFAQAGDTKQVDMLFKDLDESVVSPDVYTYNGVLDAYGKNGMIKEMESVLVRMKSTQCRPDVITFNILIDSYGRKQTFDKMEQVFKSLLRSKERPTHPTFNSMITNYGRARLREKAESVVEKMEELGFKPNYVTQECLIIMYAHCDCVSKARQVFDELVTSQTKVHLSSLNSMLEAYCMNGLHTEADRLLDTALQQCVVPNGSTYKLLYKAYTKANDKLLVQKLLKRMNKQGIVPNKKFFLDALEAFGTSDRKPRTSPGINSASKPSTDSAGDSETATSDKPEVSVWHVAAT.

A compositionally biased stretch (low complexity) spans 1–12 (MLACPSTSSPWP). The tract at residues 1-28 (MLACPSTSSPWPQRQPPSPCPGGGGGAT) is disordered. Residues 1 to 45 (MLACPSTSSPWPQRQPPSPCPGGGGGATRHVALAARSKRRGAGPA) constitute a chloroplast transit peptide. 9 PPR repeats span residues 123 to 157 (DNGI…GCKP), 158 to 193 (DTSV…KCIE), 198 to 232 (TIVT…VVSP), 233 to 267 (DVYT…QCRP), 268 to 302 (DVIT…KERP), 303 to 337 (THPT…GFKP), 338 to 372 (NYVT…QTKV), 373 to 407 (HLSS…CVVP), and 408 to 442 (NGST…GIVP). The segment at 458-499 (DRKPRTSPGINSASKPSTDSAGDSETATSDKPEVSVWHVAAT) is disordered. A compositionally biased stretch (polar residues) spans 465 to 484 (PGINSASKPSTDSAGDSETA).

This sequence belongs to the PPR family. P subfamily.

The protein resides in the plastid. The protein localises to the chloroplast. Involved in the biogenesis of the plastid translation machinery by promoting the splicing of group II introns in chloroplasts. Stabilizes the chloroplast trnG pre-RNA by directly binding to a group II intron, where it protects an endonuclease-sensitive site and stimulates splicing. Binds specific sites within group II intron trnG pre-RNA. Binds with high affinity to the 5'-UTR of the chloroplastic petA mRNA. The chain is Pentatricopeptide repeat-containing protein PPR5, chloroplastic from Zea mays (Maize).